A 250-amino-acid polypeptide reads, in one-letter code: Probable septum site-determining protein MinC (250 aa).

Positions 110 to 143 are disordered; the sequence is SGARERPLEPEPEVVKKPEPAPAPPPPPEPEVRP. Over residues 112–128 the composition is skewed to basic and acidic residues; it reads ARERPLEPEPEVVKKPE. The span at 129–138 shows a compositional bias: pro residues; it reads PAPAPPPPPE.

It belongs to the MinC family. Interacts with MinD and FtsZ.

Cell division inhibitor that blocks the formation of polar Z ring septums. Rapidly oscillates between the poles of the cell to destabilize FtsZ filaments that have formed before they mature into polar Z rings. Prevents FtsZ polymerization. This chain is Probable septum site-determining protein MinC, found in Pseudomonas putida (strain ATCC 47054 / DSM 6125 / CFBP 8728 / NCIMB 11950 / KT2440).